Here is a 284-residue protein sequence, read N- to C-terminus: Tropomyosin (284 aa).

Positions 1–284 form a coiled coil; the sequence is MDAIKKKMQA…DQTFQELFGY (284 aa). A compositionally biased stretch (basic and acidic residues) spans 113-142; that stretch reads LEKATHTADESDRVRKVMENRSFQDEERAN. A disordered region spans residues 113–143; it reads LEKATHTADESDRVRKVMENRSFQDEERANT.

Belongs to the tropomyosin family.

Its function is as follows. Tropomyosin, in association with the troponin complex, plays a central role in the calcium dependent regulation of muscle contraction. In Acanthocheilonema viteae (Filarial nematode worm), this protein is Tropomyosin.